Here is a 174-residue protein sequence, read N- to C-terminus: MAEINKPAFKKPDLKKMTPKGERKANRRGAARLAAVQALYQMDIGGAGINETFAEFESFWIGNEVEGEQYLPAEAAFFRDIVAGVVREQKQIDPLIDDLLARGWPLARIDAILRAVMRAGAYELEHRKDIPARVVVSEYVDVAHAFVEKDETGMVNAVLDQIARRFRAEEFSKG.

The protein belongs to the NusB family.

Involved in transcription antitermination. Required for transcription of ribosomal RNA (rRNA) genes. Binds specifically to the boxA antiterminator sequence of the ribosomal RNA (rrn) operons. This Rhodopseudomonas palustris (strain TIE-1) protein is Transcription antitermination protein NusB.